Here is a 253-residue protein sequence, read N- to C-terminus: Testis-expressed protein 101 (253 aa).

The signal sequence occupies residues 1 to 24 (MAACWVHYLLLLLLGVSHQTLAQS). N-linked (GlcNAc...) asparagine glycosylation is found at Asn-44, Asn-112, Asn-117, Asn-121, and Asn-162. Residues 53–117 (ETCNPGELCQ…SNYCNSSLCN (65 aa)) enclose the UPAR/Ly6 1 domain. In terms of domain architecture, UPAR/Ly6 2 spans 143-218 (CPTCVALGSC…KETCSYHSLL (76 aa)). A lipid anchor (GPI-anchor amidated serine) is attached at Ser-226. A propeptide spans 227 to 253 (RASGRSTSLWVLELLLPAVLVALTHFP) (removed in mature form).

Interacts with VAMP3. Interacts with LY6K. Interacts with DPEP3; co-localized on the cell surface of spermatocytes, spermatids, and testicular spermatozoa, co-localized only in cytoplasmic droplets of caput and corpus epididymal sperm. Interacts with ADAM5. Post-translationally, N-glycosylated; by high mannose and/or biantennary complex and/or certain types of hybrid oligosaccharides; possesses different oligosaccharides chains according to its subcellular localization in the testis. Sheds from membrane raft by ACE and released from the cell surface of epididymal sperm while it passes through the caput epididymis leading to disappearance of TEX101 on spermatozoa; is essential to produce fertile spermatozoa.

The protein resides in the cell membrane. It localises to the membrane raft. The protein localises to the cytoplasmic vesicle. Its subcellular location is the secretory vesicle. It is found in the acrosome. The protein resides in the secreted. In terms of biological role, plays a role in fertilization by controlling binding of sperm to zona pellucida and migration of spermatozoa into the oviduct. May play a role in signal transduction and promote protein tyrosine phosphorylation. This Cricetulus griseus (Chinese hamster) protein is Testis-expressed protein 101.